The chain runs to 87 residues: Small ribosomal subunit protein bS20 (87 aa).

Positions 1–15 are enriched in basic residues; the sequence is MANHKSAAKRARQSI. A disordered region spans residues 1–29; it reads MANHKSAAKRARQSIRKTAVNNARKSTVK. Residues 19–29 are compositionally biased toward polar residues; that stretch reads AVNNARKSTVK.

The protein belongs to the bacterial ribosomal protein bS20 family.

Its function is as follows. Binds directly to 16S ribosomal RNA. The protein is Small ribosomal subunit protein bS20 of Bdellovibrio bacteriovorus (strain ATCC 15356 / DSM 50701 / NCIMB 9529 / HD100).